A 171-amino-acid chain; its full sequence is Large ribosomal subunit protein uL22 (171 aa).

This sequence belongs to the universal ribosomal protein uL22 family.

The sequence is that of Large ribosomal subunit protein uL22 (RPL17) from Zea mays (Maize).